A 309-amino-acid polypeptide reads, in one-letter code: Coproporphyrin III ferrochelatase (309 aa).

Residues Tyr-12, Arg-29, 45–46 (RY), Ser-53, and Tyr-124 contribute to the Fe-coproporphyrin III site. Fe(2+) is bound by residues His-182 and Glu-263.

This sequence belongs to the ferrochelatase family.

The protein localises to the cytoplasm. The catalysed reaction is Fe-coproporphyrin III + 2 H(+) = coproporphyrin III + Fe(2+). Its pathway is porphyrin-containing compound metabolism; protoheme biosynthesis. In terms of biological role, involved in coproporphyrin-dependent heme b biosynthesis. Catalyzes the insertion of ferrous iron into coproporphyrin III to form Fe-coproporphyrin III. This is Coproporphyrin III ferrochelatase from Listeria monocytogenes serotype 4b (strain F2365).